A 339-amino-acid chain; its full sequence is Cathepsin B (339 aa).

The signal sequence occupies residues 1 to 17; sequence MWWSLIPLSCLLALTSA. Positions 18-79 are cleaved as a propeptide — activation peptide; it reads HDKPSSHPLS…ERVGFSEDIN (62 aa). 6 disulfides stabilise this stretch: Cys-93–Cys-122, Cys-105–Cys-150, Cys-141–Cys-207, Cys-142–Cys-146, Cys-179–Cys-211, and Cys-187–Cys-198. The active site involves Cys-108. N-linked (GlcNAc...) asparagine glycosylation occurs at Asn-192. Position 220 is an N6-acetyllysine (Lys-220). Active-site residues include His-278 and Asn-298. The propeptide occupies 334–339; the sequence is QYWGRF.

Belongs to the peptidase C1 family. In terms of assembly, dimer of a heavy chain and a light chain cross-linked by a disulfide bond. Interacts with SRPX2. Directly interacts with SHKBP1. As to expression, expressed in the epithelial cells of the prostate and mammary gland.

Its subcellular location is the lysosome. The protein localises to the melanosome. It is found in the secreted. The protein resides in the extracellular space. It localises to the apical cell membrane. It carries out the reaction Hydrolysis of proteins with broad specificity for peptide bonds. Preferentially cleaves -Arg-Arg-|-Xaa bonds in small molecule substrates (thus differing from cathepsin L). In addition to being an endopeptidase, shows peptidyl-dipeptidase activity, liberating C-terminal dipeptides.. Functionally, thiol protease which is believed to participate in intracellular degradation and turnover of proteins. Cleaves matrix extracellular phosphoglycoprotein MEPE. Involved in the solubilization of cross-linked TG/thyroglobulin in the thyroid follicle lumen. Has also been implicated in tumor invasion and metastasis. This chain is Cathepsin B (Ctsb), found in Rattus norvegicus (Rat).